A 243-amino-acid chain; its full sequence is Proteasome subunit beta (243 aa).

A compositionally biased stretch (polar residues) spans 1–16 (MRAPQHNSDFSRTVNQ). The disordered stretch occupies residues 1–29 (MRAPQHNSDFSRTVNQLADDPNPYEPEVG). Positions 1 to 48 (MRAPQHNSDFSRTVNQLADDPNPYEPEVGSMPKNEFSRADLDNVNKTG) are cleaved as a propeptide — removed in mature form; by autocatalysis. Residue Thr49 is the Nucleophile of the active site.

The protein belongs to the peptidase T1B family. As to quaternary structure, the 20S proteasome core is composed of 14 alpha and 14 beta subunits that assemble into four stacked heptameric rings, resulting in a barrel-shaped structure. The two inner rings, each composed of seven catalytic beta subunits, are sandwiched by two outer rings, each composed of seven alpha subunits. The catalytic chamber with the active sites is on the inside of the barrel. Has a gated structure, the ends of the cylinder being occluded by the N-termini of the alpha-subunits. Is capped at one or both ends by the proteasome regulatory ATPase, PAN.

The protein localises to the cytoplasm. The enzyme catalyses Cleavage of peptide bonds with very broad specificity.. With respect to regulation, the formation of the proteasomal ATPase PAN-20S proteasome complex, via the docking of the C-termini of PAN into the intersubunit pockets in the alpha-rings, triggers opening of the gate for substrate entry. Interconversion between the open-gate and close-gate conformations leads to a dynamic regulation of the 20S proteasome proteolysis activity. Its function is as follows. Component of the proteasome core, a large protease complex with broad specificity involved in protein degradation. The polypeptide is Proteasome subunit beta (Natrialba magadii (strain ATCC 43099 / DSM 3394 / CCM 3739 / CIP 104546 / IAM 13178 / JCM 8861 / NBRC 102185 / NCIMB 2190 / MS3) (Natronobacterium magadii)).